An 813-amino-acid chain; its full sequence is Acyl-homoserine lactone acylase QuiP (813 aa).

A signal peptide spans 1 to 26 (MAAPAFPPFRLRFATAATLLGMLGLA). Ser262 functions as the Nucleophile in the catalytic mechanism.

It belongs to the peptidase S45 family. As to quaternary structure, heterodimer of an alpha subunit and a beta subunit processed from the same precursor.

Its subcellular location is the periplasm. The catalysed reaction is an N-acyl-L-homoserine lactone + H2O = L-homoserine lactone + a carboxylate. In terms of biological role, catalyzes the deacylation of acyl-homoserine lactone (AHL or acyl-HSL), releasing homoserine lactone (HSL) and the corresponding fatty acid. Possesses a specificity for the degradation of long-chain acyl-HSLs (side chains of seven or more carbons in length). The chain is Acyl-homoserine lactone acylase QuiP (quiP) from Pseudomonas putida (strain ATCC 47054 / DSM 6125 / CFBP 8728 / NCIMB 11950 / KT2440).